Here is a 1128-residue protein sequence, read N- to C-terminus: Major DNA-binding protein (1128 aa).

Residues 1104–1128 (LGGGGQGSGGRRKRRLATVLPGLEV) are required for nuclear localization.

It belongs to the herpesviridae major DNA-binding protein family. As to quaternary structure, homooligomers. Forms double-helical filaments necessary for the formation of replication compartments within the host nucleus. Interacts with the origin-binding protein. Interacts with the helicase primase complex; this interaction stimulates primer synthesis activity of the helicase-primase complex. Interacts with the DNA polymerase. Interacts with the alkaline exonuclease; this interaction increases its nuclease processivity.

It is found in the virion tegument. The protein localises to the host nucleus. In terms of biological role, plays several crucial roles in viral infection. Participates in the opening of the viral DNA origin to initiate replication by interacting with the origin-binding protein. May disrupt loops, hairpins and other secondary structures present on ssDNA to reduce and eliminate pausing of viral DNA polymerase at specific sites during elongation. Promotes viral DNA recombination by performing strand-transfer, characterized by the ability to transfer a DNA strand from a linear duplex to a complementary single-stranded DNA circle. Can also catalyze the renaturation of complementary single strands. Additionally, reorganizes the host cell nucleus, leading to the formation of prereplicative sites and replication compartments. This process is driven by the protein which can form double-helical filaments in the absence of DNA. In Homo sapiens (Human), this protein is Major DNA-binding protein.